Reading from the N-terminus, the 176-residue chain is MFDTMTVTKAAGALIGSLLFLLLMSWAASGIFHVGTSGHGAEGEEHAQAYTYPVESAGGAEGEAVDEGPDFATVLASADPAAGEKVFGKCKACHKLDGNDGVGPHLNGVVGRTVAGVDGFNYSDPMKAHGGDWTPEALQEFLTNPKAVVKGTKMAFAGLPKIEDRANLIAYLEGQQ.

A helical; Signal-anchor transmembrane segment spans residues Gly12–Phe32. Residues Cys90, Cys93, His94, Met126, and Met154 each coordinate heme c.

Binds 1 heme c group covalently per subunit.

It localises to the cell membrane. Functionally, mediates the electron transport between the cytochrome bc1 complex and cytochrome-c oxidase. This is Cytochrome c-552 (cycM) from Paracoccus denitrificans.